The chain runs to 115 residues: MDKTQKGKFFEDKAVRYLESIGYKVLHKNYRSKYGEIDIIAETDNVIVFVEVKGRFTENFGSGEESITKKKIDKIVKTALQFIEENNLQGKDFRFDVVALKGNQIFHLENAFSLE.

The protein belongs to the UPF0102 family.

The protein is UPF0102 protein SYO3AOP1_0546 of Sulfurihydrogenibium sp. (strain YO3AOP1).